We begin with the raw amino-acid sequence, 298 residues long: (DL)-glycerol-3-phosphatase 1, mitochondrial (298 aa).

The transit peptide at 1–46 (MLTTPTRFVALRIPFRSSNKIPISIAPSPKVFPRKPVIRVPASLRF) directs the protein to the mitochondrion. Catalysis depends on aspartate 77, which acts as the Nucleophile. Positions 77, 79, and 242 each coordinate Mg(2+). The Proton donor role is filled by aspartate 79.

The protein belongs to the HAD-like hydrolase superfamily. DOG/GPP family. Mg(2+) is required as a cofactor. In terms of tissue distribution, ubiquitous with highest expression in siliques. Mainly restricted to the meristem of immature flower and vascular elements of the root, shoot, leave, siliqua and developing embryo (at the protein level).

Its subcellular location is the mitochondrion. It catalyses the reaction sn-glycerol 1-phosphate + H2O = glycerol + phosphate. The catalysed reaction is sn-glycerol 3-phosphate + H2O = glycerol + phosphate. The enzyme catalyses 5-amino-6-(5-phospho-D-ribitylamino)uracil + H2O = 5-amino-6-(D-ribitylamino)uracil + phosphate. In terms of biological role, acts as a glycerol-3-phosphatase with higher stereospecificity for L-glycerol-3-phosphate than DL-glycerol-3-phosphate. Can also dephosphorylate in vitro 5-amino-6-(5-phospho-D-ribitylamino)uracil, also known as ARPP. The protein is (DL)-glycerol-3-phosphatase 1, mitochondrial of Arabidopsis thaliana (Mouse-ear cress).